The sequence spans 105 residues: ETYTVKLGSDKGLLVFEPAKLTIKPGDTVEFLNNKVPPHNVVFDAALNPAKSADLAKSLSHKQLLMSPGQSTSTTFPADAPAGEYTFYCEPHRGAGMVGKITVAG.

In terms of domain architecture, Plastocyanin-like spans 1-105 (ETYTVKLGSD…GMVGKITVAG (105 aa)). His39, Cys89, His92, and Met97 together coordinate Cu(2+).

It belongs to the plastocyanin family. It depends on Cu(2+) as a cofactor.

It is found in the cellular thylakoid membrane. Functionally, participates in electron transfer between P700 and the cytochrome b6-f complex in photosystem I. In Anabaena variabilis, this protein is Plastocyanin (petE).